The following is a 737-amino-acid chain: ATP-dependent RNA helicase SUV3, mitochondrial (737 aa).

Residues 1–25 (MALVKYSTVFFPLRSLRLFVSIKKA) constitute a mitochondrion transit peptide. One can recognise a Helicase ATP-binding domain in the interval 226–365 (EARKIRRHII…KSVLPLVKSI (140 aa)). Residue 239 to 246 (GPTNSGKT) coordinates ATP. One can recognise a Helicase C-terminal domain in the interval 390 to 546 (PIKDGIKGLR…YLKTAVTWPT (157 aa)).

It belongs to the helicase family. In terms of assembly, MSU1 and SUV3 are the two components of the mitochondrial degradosome (mtEXO).

The protein resides in the mitochondrion matrix. It carries out the reaction ATP + H2O = ADP + phosphate + H(+). In terms of biological role, required for intron-independent turnover and processing of mitochondrial RNA. It is a key control element in nuclear-mitochondrial interactions. This chain is ATP-dependent RNA helicase SUV3, mitochondrial (SUV3), found in Saccharomyces cerevisiae (strain ATCC 204508 / S288c) (Baker's yeast).